We begin with the raw amino-acid sequence, 249 residues long: MIEFKKVEKVWPNGKHVLKDINLKINAGEFVAVIGLSGAGKTTLLKTINKINNISSGEIFIDINENEKYEINKTKGKSLRNLRKHIGLMSQEYNNIEKQTVLKNVLNSRVAQMNFFRAMAGFFTKEEKQNALAALEKLNLLEFSYIRADNLSGGQQQRVALARTINQNPKIIIADEPVSALDPILANRVMEDFKKINSELNITVIINIHHVDLALKYCDRIIGLKDGEIVFDGDPKKLNESKLEEIYGK.

In terms of domain architecture, ABC transporter spans 2–246 (IEFKKVEKVW…KLNESKLEEI (245 aa)). An ATP-binding site is contributed by 35-42 (GLSGAGKT).

It belongs to the ABC transporter superfamily. Phosphonates importer (TC 3.A.1.9.1) family. The complex is composed of two ATP-binding proteins (PhnC), two transmembrane proteins (PhnE) and a solute-binding protein (PhnD).

It is found in the cell membrane. The enzyme catalyses phosphonate(out) + ATP + H2O = phosphonate(in) + ADP + phosphate + H(+). In terms of biological role, part of the ABC transporter complex PhnCDE involved in phosphonates import. Responsible for energy coupling to the transport system. This chain is Phosphonates import ATP-binding protein PhnC, found in Mesoplasma florum (strain ATCC 33453 / NBRC 100688 / NCTC 11704 / L1) (Acholeplasma florum).